Here is a 244-residue protein sequence, read N- to C-terminus: 5-oxoprolinase subunit A (244 aa).

This sequence belongs to the LamB/PxpA family. In terms of assembly, forms a complex composed of PxpA, PxpB and PxpC.

The enzyme catalyses 5-oxo-L-proline + ATP + 2 H2O = L-glutamate + ADP + phosphate + H(+). Catalyzes the cleavage of 5-oxoproline to form L-glutamate coupled to the hydrolysis of ATP to ADP and inorganic phosphate. This is 5-oxoprolinase subunit A from Escherichia coli O139:H28 (strain E24377A / ETEC).